Reading from the N-terminus, the 222-residue chain is UPF0502 protein SO_1867 (222 aa).

The segment covering 169–193 (EQVSATSLSADSPSADSNSLNAQDR) has biased composition (polar residues). Residues 169–195 (EQVSATSLSADSPSADSNSLNAQDRQQ) form a disordered region.

This sequence belongs to the UPF0502 family.

This chain is UPF0502 protein SO_1867, found in Shewanella oneidensis (strain ATCC 700550 / JCM 31522 / CIP 106686 / LMG 19005 / NCIMB 14063 / MR-1).